A 637-amino-acid chain; its full sequence is 1,4-alpha-glucan branching enzyme GlgB (637 aa).

Asp307 (nucleophile) is an active-site residue. Glu361 serves as the catalytic Proton donor.

This sequence belongs to the glycosyl hydrolase 13 family. GlgB subfamily. Monomer.

It catalyses the reaction Transfers a segment of a (1-&gt;4)-alpha-D-glucan chain to a primary hydroxy group in a similar glucan chain.. Its pathway is glycan biosynthesis; glycogen biosynthesis. Catalyzes the formation of the alpha-1,6-glucosidic linkages in glycogen by scission of a 1,4-alpha-linked oligosaccharide from growing alpha-1,4-glucan chains and the subsequent attachment of the oligosaccharide to the alpha-1,6 position. The protein is 1,4-alpha-glucan branching enzyme GlgB of Oceanobacillus iheyensis (strain DSM 14371 / CIP 107618 / JCM 11309 / KCTC 3954 / HTE831).